A 398-amino-acid chain; its full sequence is Bifunctional enzyme IspD/IspF (398 aa).

Positions Met-1 to Ile-234 are 2-C-methyl-D-erythritol 4-phosphate cytidylyltransferase. The segment at Arg-235–Gly-398 is 2-C-methyl-D-erythritol 2,4-cyclodiphosphate synthase. A divalent metal cation-binding residues include Asp-241 and His-243. Residues Asp-241 to His-243 and His-267 to Ser-268 each bind 4-CDP-2-C-methyl-D-erythritol 2-phosphate. His-275 is a binding site for a divalent metal cation. Residues Asp-289 to Gly-291, Thr-365 to Glu-368, Phe-372, and Arg-375 contribute to the 4-CDP-2-C-methyl-D-erythritol 2-phosphate site.

It in the N-terminal section; belongs to the IspD/TarI cytidylyltransferase family. IspD subfamily. The protein in the C-terminal section; belongs to the IspF family. A divalent metal cation is required as a cofactor.

It carries out the reaction 2-C-methyl-D-erythritol 4-phosphate + CTP + H(+) = 4-CDP-2-C-methyl-D-erythritol + diphosphate. The enzyme catalyses 4-CDP-2-C-methyl-D-erythritol 2-phosphate = 2-C-methyl-D-erythritol 2,4-cyclic diphosphate + CMP. It functions in the pathway isoprenoid biosynthesis; isopentenyl diphosphate biosynthesis via DXP pathway; isopentenyl diphosphate from 1-deoxy-D-xylulose 5-phosphate: step 2/6. Its pathway is isoprenoid biosynthesis; isopentenyl diphosphate biosynthesis via DXP pathway; isopentenyl diphosphate from 1-deoxy-D-xylulose 5-phosphate: step 4/6. Functionally, bifunctional enzyme that catalyzes the formation of 4-diphosphocytidyl-2-C-methyl-D-erythritol from CTP and 2-C-methyl-D-erythritol 4-phosphate (MEP) (IspD), and catalyzes the conversion of 4-diphosphocytidyl-2-C-methyl-D-erythritol 2-phosphate (CDP-ME2P) to 2-C-methyl-D-erythritol 2,4-cyclodiphosphate (ME-CPP) with a corresponding release of cytidine 5-monophosphate (CMP) (IspF). The chain is Bifunctional enzyme IspD/IspF from Rhodopseudomonas palustris (strain BisA53).